Consider the following 235-residue polypeptide: Large ribosomal subunit protein uL3 (235 aa).

Belongs to the universal ribosomal protein uL3 family. As to quaternary structure, part of the 50S ribosomal subunit. Forms a cluster with proteins L14 and L19.

One of the primary rRNA binding proteins, it binds directly near the 3'-end of the 23S rRNA, where it nucleates assembly of the 50S subunit. This chain is Large ribosomal subunit protein uL3, found in Frankia casuarinae (strain DSM 45818 / CECT 9043 / HFP020203 / CcI3).